The chain runs to 96 residues: Aspartyl/glutamyl-tRNA(Asn/Gln) amidotransferase subunit C (96 aa).

Belongs to the GatC family. In terms of assembly, heterotrimer of A, B and C subunits.

It carries out the reaction L-glutamyl-tRNA(Gln) + L-glutamine + ATP + H2O = L-glutaminyl-tRNA(Gln) + L-glutamate + ADP + phosphate + H(+). It catalyses the reaction L-aspartyl-tRNA(Asn) + L-glutamine + ATP + H2O = L-asparaginyl-tRNA(Asn) + L-glutamate + ADP + phosphate + 2 H(+). Its function is as follows. Allows the formation of correctly charged Asn-tRNA(Asn) or Gln-tRNA(Gln) through the transamidation of misacylated Asp-tRNA(Asn) or Glu-tRNA(Gln) in organisms which lack either or both of asparaginyl-tRNA or glutaminyl-tRNA synthetases. The reaction takes place in the presence of glutamine and ATP through an activated phospho-Asp-tRNA(Asn) or phospho-Glu-tRNA(Gln). In Bacillus cytotoxicus (strain DSM 22905 / CIP 110041 / 391-98 / NVH 391-98), this protein is Aspartyl/glutamyl-tRNA(Asn/Gln) amidotransferase subunit C.